Reading from the N-terminus, the 231-residue chain is 5'-methylthioadenosine/S-adenosylhomocysteine nucleosidase (231 aa).

Catalysis depends on Glu12, which acts as the Proton acceptor. Substrate is bound by residues Gly78, Val153, and 174-175 (ME). The active-site Proton donor is the Asp198.

This sequence belongs to the PNP/UDP phosphorylase family. MtnN subfamily.

It carries out the reaction S-adenosyl-L-homocysteine + H2O = S-(5-deoxy-D-ribos-5-yl)-L-homocysteine + adenine. It catalyses the reaction S-methyl-5'-thioadenosine + H2O = 5-(methylsulfanyl)-D-ribose + adenine. The enzyme catalyses 5'-deoxyadenosine + H2O = 5-deoxy-D-ribose + adenine. The protein operates within amino-acid biosynthesis; L-methionine biosynthesis via salvage pathway; S-methyl-5-thio-alpha-D-ribose 1-phosphate from S-methyl-5'-thioadenosine (hydrolase route): step 1/2. Its function is as follows. Catalyzes the irreversible cleavage of the glycosidic bond in both 5'-methylthioadenosine (MTA) and S-adenosylhomocysteine (SAH/AdoHcy) to adenine and the corresponding thioribose, 5'-methylthioribose and S-ribosylhomocysteine, respectively. Also cleaves 5'-deoxyadenosine, a toxic by-product of radical S-adenosylmethionine (SAM) enzymes, into 5-deoxyribose and adenine. The sequence is that of 5'-methylthioadenosine/S-adenosylhomocysteine nucleosidase from Vibrio campbellii (strain ATCC BAA-1116).